We begin with the raw amino-acid sequence, 374 residues long: tRNA-specific 2-thiouridylase MnmA (374 aa).

Residues 12-19 and methionine 38 contribute to the ATP site; that span reads GMSGGVDS. The tract at residues 98–100 is interaction with target base in tRNA; the sequence is NPD. The active-site Nucleophile is the cysteine 103. A disulfide bridge links cysteine 103 with cysteine 200. Residue glycine 127 participates in ATP binding. Positions 150–152 are interaction with tRNA; the sequence is KDQ. Cysteine 200 serves as the catalytic Cysteine persulfide intermediate. The interaction with tRNA stretch occupies residues 311-312; that stretch reads RY.

The protein belongs to the MnmA/TRMU family.

The protein resides in the cytoplasm. The catalysed reaction is S-sulfanyl-L-cysteinyl-[protein] + uridine(34) in tRNA + AH2 + ATP = 2-thiouridine(34) in tRNA + L-cysteinyl-[protein] + A + AMP + diphosphate + H(+). Functionally, catalyzes the 2-thiolation of uridine at the wobble position (U34) of tRNA, leading to the formation of s(2)U34. This is tRNA-specific 2-thiouridylase MnmA from Lactiplantibacillus plantarum (strain ATCC BAA-793 / NCIMB 8826 / WCFS1) (Lactobacillus plantarum).